The sequence spans 205 residues: Holliday junction branch migration complex subunit RuvA (205 aa).

Positions 1–64 (MIGKLRGLID…EDQIKLFGFR (64 aa)) are domain I. The interval 65–143 (SDVEREWFRL…AFANVDPGVV (79 aa)) is domain II. The flexible linker stretch occupies residues 144 to 154 (RLSGAIEESRA). The domain III stretch occupies residues 154-205 (APQPVADAISALINLGYGQPQAAAAIAAASRAAGDKAETAQLIRLGLKELAK).

It belongs to the RuvA family. Homotetramer. Forms an RuvA(8)-RuvB(12)-Holliday junction (HJ) complex. HJ DNA is sandwiched between 2 RuvA tetramers; dsDNA enters through RuvA and exits via RuvB. An RuvB hexamer assembles on each DNA strand where it exits the tetramer. Each RuvB hexamer is contacted by two RuvA subunits (via domain III) on 2 adjacent RuvB subunits; this complex drives branch migration. In the full resolvosome a probable DNA-RuvA(4)-RuvB(12)-RuvC(2) complex forms which resolves the HJ.

It localises to the cytoplasm. Functionally, the RuvA-RuvB-RuvC complex processes Holliday junction (HJ) DNA during genetic recombination and DNA repair, while the RuvA-RuvB complex plays an important role in the rescue of blocked DNA replication forks via replication fork reversal (RFR). RuvA specifically binds to HJ cruciform DNA, conferring on it an open structure. The RuvB hexamer acts as an ATP-dependent pump, pulling dsDNA into and through the RuvAB complex. HJ branch migration allows RuvC to scan DNA until it finds its consensus sequence, where it cleaves and resolves the cruciform DNA. The protein is Holliday junction branch migration complex subunit RuvA of Bradyrhizobium sp. (strain ORS 278).